Reading from the N-terminus, the 315-residue chain is DNA-directed RNA polymerase subunit alpha (315 aa).

The alpha N-terminal domain (alpha-NTD) stretch occupies residues 1–228 (MLEIEKPKIE…EHLRLFIGLT (228 aa)). The alpha C-terminal domain (alpha-CTD) stretch occupies residues 246–315 (DKILEMTIEE…LGLSLRQEDE (70 aa)).

The protein belongs to the RNA polymerase alpha chain family. Homodimer. The RNAP catalytic core consists of 2 alpha, 1 beta, 1 beta' and 1 omega subunit. When a sigma factor is associated with the core the holoenzyme is formed, which can initiate transcription.

It catalyses the reaction RNA(n) + a ribonucleoside 5'-triphosphate = RNA(n+1) + diphosphate. DNA-dependent RNA polymerase catalyzes the transcription of DNA into RNA using the four ribonucleoside triphosphates as substrates. The polypeptide is DNA-directed RNA polymerase subunit alpha (Desulforamulus reducens (strain ATCC BAA-1160 / DSM 100696 / MI-1) (Desulfotomaculum reducens)).